We begin with the raw amino-acid sequence, 328 residues long: dITP/XTP pyrophosphatase (328 aa).

The interval 1–129 (MSEKIYEYKD…ATSEQGFGDT (129 aa)) is unknown. An NTP pyrophosphatase region spans residues 130-324 (ILIATRNEGK…KLMEVFPAWQ (195 aa)). Substrate is bound at residue 134 to 139 (TRNEGK). The Proton acceptor role is filled by aspartate 196. Residue aspartate 196 coordinates Mg(2+). Substrate contacts are provided by residues serine 197, 280–283 (FGYD), lysine 303, and 308–309 (HR).

It belongs to the HAM1 NTPase family. As to quaternary structure, homodimer. The cofactor is Mg(2+).

The catalysed reaction is XTP + H2O = XMP + diphosphate + H(+). It catalyses the reaction dITP + H2O = dIMP + diphosphate + H(+). The enzyme catalyses ITP + H2O = IMP + diphosphate + H(+). Functionally, pyrophosphatase that catalyzes the hydrolysis of nucleoside triphosphates to their monophosphate derivatives, with a high preference for the non-canonical purine nucleotides XTP (xanthosine triphosphate), dITP (deoxyinosine triphosphate) and ITP. Seems to function as a house-cleaning enzyme that removes non-canonical purine nucleotides from the nucleotide pool, thus preventing their incorporation into DNA/RNA and avoiding chromosomal lesions. The protein is dITP/XTP pyrophosphatase of Streptococcus pyogenes serotype M18 (strain MGAS8232).